A 770-amino-acid polypeptide reads, in one-letter code: ATP-dependent RNA helicase mak5 (770 aa).

The span at 1–10 (MGQKRQRDQK) shows a compositional bias: basic and acidic residues. Disordered regions lie at residues 1 to 33 (MGQK…ERES) and 78 to 174 (NGQL…AKDR). A compositionally biased stretch (acidic residues) spans 105-118 (TEFDDEWNGFSDED). Composition is skewed to basic and acidic residues over residues 138–154 (NGKK…IKAK) and 162–174 (EQKE…AKDR). The Q motif motif lies at 197-225 (SAWEPLGLSPETLTSLSKLKFSTPTSVQK). The Helicase ATP-binding domain occupies 228 to 437 (IPPILDGHDV…AGKGKWTGGD (210 aa)). An ATP-binding site is contributed by 241-248 (ASTGSGKT). The short motif at 363–366 (DEAD) is the DEAD box element. A disordered region spans residues 384–404 (LDRVEDGGPPDEEDDSSEENV). Over residues 391-401 (GPPDEEDDSSE) the composition is skewed to acidic residues. One can recognise a Helicase C-terminal domain in the interval 489–639 (YLYTLLLYHP…KLPLESLELD (151 aa)). A disordered region spans residues 693–713 (KGWGRGRGRGRQERDRQVGST).

It belongs to the DEAD box helicase family. DDX24/MAK5 subfamily.

It is found in the nucleus. It localises to the nucleolus. It carries out the reaction ATP + H2O = ADP + phosphate + H(+). In terms of biological role, ATP-binding RNA helicase involved in the biogenesis of 60S ribosomal subunits and is required for the normal formation of 25S and 5.8S rRNAs. The chain is ATP-dependent RNA helicase mak5 (mak5) from Emericella nidulans (strain FGSC A4 / ATCC 38163 / CBS 112.46 / NRRL 194 / M139) (Aspergillus nidulans).